We begin with the raw amino-acid sequence, 387 residues long: uncharacterized protein (387 aa).

The protein resides in the virion. This is an uncharacterized protein from Acanthamoeba polyphaga (Amoeba).